The following is a 236-amino-acid chain: Small ribosomal subunit protein uS3 (236 aa).

A KH type-2 domain is found at 39-107 (VREFLKKKLA…PVHLNIEEVR (69 aa)). The disordered stretch occupies residues 215 to 236 (AAQPAEPEKKVRKSGAKNAATS).

It belongs to the universal ribosomal protein uS3 family. Part of the 30S ribosomal subunit. Forms a tight complex with proteins S10 and S14.

Binds the lower part of the 30S subunit head. Binds mRNA in the 70S ribosome, positioning it for translation. This Methylobacillus flagellatus (strain ATCC 51484 / DSM 6875 / VKM B-1610 / KT) protein is Small ribosomal subunit protein uS3.